The chain runs to 318 residues: 2-methyl-6-phytyl-1,4-hydroquinone methyltransferase (318 aa).

An N-terminal signal peptide occupies residues 1-39 (MPEYLLLPAGLISLSLAIAAGLYLLTARGYQSSDSVANA). The SAM motif I stretch occupies residues 97–106 (VLDVGCGIGG). Residues 157–165 (GSFDVVWSV) form an SAM motif II region. An SAM motif III region spans residues 184-193 (VVKPGGILVV).

This sequence belongs to the class I-like SAM-binding methyltransferase superfamily. gTMT family.

The enzyme catalyses 2-methyl-6-phytyl-1,4-benzene-1,4-diol + S-adenosyl-L-methionine = 2,3-dimethyl-6-phytylbenzene-1,4-diol + S-adenosyl-L-homocysteine + H(+). It catalyses the reaction 2-methyl-6-(all-trans-nonaprenyl)benzene-1,4-diol + S-adenosyl-L-methionine = plastoquinol-9 + S-adenosyl-L-homocysteine + H(+). It carries out the reaction 6-geranylgeranyl-2-methylbenzene-1,4-diol + S-adenosyl-L-methionine = 6-geranylgeranyl-2,3-dimethylbenzene-1,4-diol + S-adenosyl-L-homocysteine + H(+). The protein operates within cofactor biosynthesis; tocopherol biosynthesis. Its function is as follows. Involved in a key methylation step in both tocopherol (vitamin E) and plastoquinone synthesis. Catalyzes the conversion of 2-methyl-6-phytyl-1,4-hydroquinol (MPBQ) to 2,3-dimethyl-6-phytyl-1,4-hydroquinol (DMPQ, a substrate for tocopherol cyclase), and 2-methyl-6-solanyl-1,4-benzoquinol (MSBQ) to plastoquinol. The sequence is that of 2-methyl-6-phytyl-1,4-hydroquinone methyltransferase from Synechocystis sp. (strain ATCC 27184 / PCC 6803 / Kazusa).